We begin with the raw amino-acid sequence, 467 residues long: Indoleacetamide hydrolase (467 aa).

Residues Lys74 and Ser149 each act as charge relay system in the active site. Catalysis depends on Ser173, which acts as the Acyl-ester intermediate.

The protein belongs to the amidase family.

The protein operates within plant hormone metabolism; auxin biosynthesis. Its function is as follows. Hydrolyzes indole-3-acetamide (IAM) into indole-3-acetic acid (IAA). This is Indoleacetamide hydrolase (tms2) from Rhizobium radiobacter (Agrobacterium tumefaciens).